We begin with the raw amino-acid sequence, 387 residues long: Diels-Alderase ORF3 (387 aa).

Belongs to the Diels-Alderase family.

The protein operates within secondary metabolite biosynthesis. In terms of biological role, diels-Alderase; part of the gene cluster that mediates the biosynthesis of a tyrosine-derived cytochalasan acting as a fungal signal recognized by resistant rice plants and leads to avirulence in Pi33 resistant rice cultivars. The first step in the pathway is catalyzed by the hybrid PKS-NRPS ACE1, assisted by the enoyl reductase RAP1, that are responsible for fusion of the tyrosine precursor and the polyketide backbone. The polyketide synthase module (PKS) of ACE1 is responsible for the synthesis of the polyketide backbone and the downstream nonribosomal peptide synthetase (NRPS) amidates the carboxyl end of the polyketide with the tyrosine precursor. Because ACE1 lacks a designated enoylreductase (ER) domain, the required activity is provided the enoyl reductase RAP1. Reduction by the hydrolyase ORFZ, followed by dehydration and intra-molecular Diels-Alder cyclization by the Diels-Alderase ORF3 then yield the required isoindolone-fused macrocycle. A number of oxidative steps catalyzed by the tailoring enzymes identified within the cluster, including cytochrome P450 monooxygenases CYP1 to CYP4, the FAD-linked oxidoreductase OXR2 and the short-chain dehydrogenase/reductase OXR1, are further required to afford the final cytochalasans that confer avirulence and which have still to be identified. The monooxygenase CYP1 has been shown to be a site-selective C-18 hydroxylase whereas the function of CYP3 is the site-selective epoxidation of the C-6/C-7 olefin that is present in some intermediate compounds. Finally, SYN2 and RAP2 are not required for avirulence in Pi33 resistant rice cultivars. This is Diels-Alderase ORF3 from Pyricularia oryzae (strain 70-15 / ATCC MYA-4617 / FGSC 8958) (Rice blast fungus).